The primary structure comprises 821 residues: MENYLLSSPTQLSQPYDDGTNSLLFMDNYELSQNLSQPLDQHLQSLQQQSQVQSQAPQQVQSLNQHQQLPQIQPFPTLVNNQQYAQETFQQLSQQHQQQQQQQQQFSPFQQSQLQQQFQYQYSQQQQQQHFQQPVTIEEEIVPASNNTNIQISKFFDDNKGDDEDIANSGNFNEFDHSRNISLDDTTITDLHRRENSINPPTGLPHSISSNTIYSYSSFESPQSHIQSQPSYSQGYHNQNSLSTPLRRNKSYSISSANFNQSPVNLATTAMNKIMKTPLRGHTRSRSKVDVNAAVTAAMNLGQATKSNSTSSYNSTLNPFYTPSQQLSSTDDDDISTPLLTPGTKLHTSKSTFFSPYNKDDLEDQDDDAVKQLRKAKSYTSLLRKKKREDMTPSKQNQQHQQQQQQQQQQQQSRQSGGGHIQNLSFPNSTSQPKIDLLAYDQNPMTSYPPMDKSILKNLNQSISPFNKPKLSPPPSNFPSISIDLTTIATNKSSSFSSSTTHRNYNENTPFNSANSTSGGLLPPMATFTVPTVIKEELQVHNLQEEEQEHQDEQMEIDSFESNEKNARPTLSTSSLVRSMKMANLEISNDQQMSSNEDENIVTEAVVKQEKNGPVVDDVNGTGTNSKKPRKKQKSKSKENCNKKGKVATGNGKDNDKNNECLVNKGNKTNNNDTSNDKLDNDNKNTNGNGNNDNDNDSEENNDNVDDADDDDDGTVTIPIPEDLNVTKVKVRNNRSKSNDKSDPKKKHKCPICESRFQRPEHVKRHLKSHSSEKPFECQMPNCGKRFNRKDNLKAHLKKIHGLVKGQEEFTRVLNENKEVS.

Disordered regions lie at residues 42-66, 219-245, 305-432, 544-576, and 607-750; these read HLQS…LNQH, FESP…LSTP, TKSN…STSQ, QEEE…TSSL, and VKQE…KHKC. Polar residues predominate over residues 222–245; the sequence is PQSHIQSQPSYSQGYHNQNSLSTP. Low complexity predominate over residues 305–318; that stretch reads TKSNSTSSYNSTLN. A compositionally biased stretch (polar residues) spans 319–329; it reads PFYTPSQQLSS. Residues 372 to 387 show a composition bias toward basic residues; that stretch reads QLRKAKSYTSLLRKKK. Over residues 396–412 the composition is skewed to low complexity; it reads QNQQHQQQQQQQQQQQQ. The span at 422 to 432 shows a compositional bias: polar residues; the sequence is QNLSFPNSTSQ. The segment covering 545-561 has biased composition (acidic residues); that stretch reads EEEQEHQDEQMEIDSFE. Low complexity-rich tracts occupy residues 662–674 and 684–693; these read LVNK…NNDT and KNTNGNGNND. Over residues 694–714 the composition is skewed to acidic residues; the sequence is NDNDSEENNDNVDDADDDDDG. C2H2-type zinc fingers lie at residues 748 to 770 and 776 to 801; these read HKCP…LKSH and FECQ…KKIH. The residue at position 769 (Ser-769) is a Phosphoserine.

In terms of processing, phosphorylation at Ser-769 and probably additional serine residues. GLC7 dephosphorylates CAS5 in response to cell wall stress which leads to its translocation to the nucleus.

The protein localises to the nucleus. It is found in the cytoplasm. In terms of biological role, transcription factor that acts with ADA2 to promote cell wall integrity. Regulates the expression of target genes in concert with the transcriptional regulators SWI4 and SWI6. Crucial for proper cell cycle dynamics and responses to echinocandins, which inhibit beta-1,3-glucan synthesis. Has distinct transcriptional targets under basal and stress conditions. Also regulates a transcriptional network that influences the response to fluconazole. Plays a key role in adherence, hyphal development, and virulence. Acts as a repressor of hypha-specific genes during yeast-form growth. This chain is Cell wall integrity transcriptional regulator CAS5, found in Candida albicans (strain SC5314 / ATCC MYA-2876) (Yeast).